The chain runs to 375 residues: ATP-sensitive inward rectifier potassium channel 15 (375 aa).

Over 1–60 (MDAIHLGMSSAPLVKHTNGVGLKAHRPRVMSKSGHSNVRIDKVDGIYLLYLQDLWTTVID) the chain is Cytoplasmic. A helical membrane pass occupies residues 61–87 (MKWRYKLTLFAATFVMTWFLFGVVYYA). Topologically, residues 88–113 (IAFIHGDLQLGESNSNHTPCIMKVDS) are extracellular. The segment at residues 114 to 130 (LTGAFLFSLESQTTIGY) is an intramembrane region (helical; Pore-forming). Positions 127-132 (TIGYGV) match the Selectivity filter motif. The Extracellular segment spans residues 131–139 (GVRSITEEC). The chain crosses the membrane as a helical span at residues 140-165 (PHAIFLLVAQLVITTLIEIFITGTFL). At 166-375 (AKIARPKKRA…RSLLLQQSNV (210 aa)) the chain is on the cytoplasmic side.

The protein belongs to the inward rectifier-type potassium channel (TC 1.A.2.1) family. KCNJ15 subfamily. In terms of assembly, can form heteromultimeric channels with Kir5.1/KCNJ16. Interacts with PATJ. As to expression, expressed in the proximal segment of the nephron.

It localises to the membrane. The protein resides in the cell membrane. The enzyme catalyses K(+)(in) = K(+)(out). Its activity is regulated as follows. Channel activity is regulated by variations of cytosolic pH; reversibly inhibited by acidic pH values. Inhibited by Ba(2+) and Cs(+) in a voltage-dependent manner. Inward rectifier potassium channels are characterized by a greater tendency to allow potassium to flow into the cell rather than out of it. Their voltage dependence is regulated by the concentration of extracellular potassium; as external potassium is raised, the voltage range of the channel opening shifts to more positive voltages. The inward rectification is mainly due to the blockage of outward current by internal magnesium. This is ATP-sensitive inward rectifier potassium channel 15 (Kcnj15) from Mus musculus (Mouse).